The sequence spans 405 residues: L-rhamnonate dehydratase (405 aa).

Substrate-binding residues include histidine 33 and arginine 59. Positions 226, 252, and 280 each coordinate Mg(2+). Histidine 329 acts as the Proton acceptor in catalysis. Position 349 (glutamate 349) interacts with substrate.

The protein belongs to the mandelate racemase/muconate lactonizing enzyme family. RhamD subfamily. In terms of assembly, homooctamer; tetramer of dimers. It depends on Mg(2+) as a cofactor.

The enzyme catalyses L-rhamnonate = 2-dehydro-3-deoxy-L-rhamnonate + H2O. Functionally, catalyzes the dehydration of L-rhamnonate to 2-keto-3-deoxy-L-rhamnonate (KDR). In Escherichia coli O6:K15:H31 (strain 536 / UPEC), this protein is L-rhamnonate dehydratase.